A 351-amino-acid chain; its full sequence is MTIAVGRAPQRGWFDVLDDWLKRDRFVFVGWSGILLLPTAYLAIGGWLTGTTFVTSWYTHGIASSYLEGCNFLTAAVSTPADAMGHSLLLLWGPEAQGDFVRWCQLGGLWAFVALHGAFALIGFMLRQFEIARLVGIRPYNAIAFSGPIAVFVSVFLMYPLGQSSWFFAPSFGVAAIFRFLLFLQGFHNWTLNPFHMMGVAGILGGALLCAIHGATVENTLFEDGEQANTFKAFEPTQEEETYSMVTANRFWSQIFGIAFSNKRWLHFFMLFVPVMGLWTSSIGIIGLALNLRAYDFVSQEIRAAEDPEFETFYTKNILLNEGLRAWMAPADQPHENFVFPEEVLPRGNAL.

A helical membrane pass occupies residues 39–59 (TAYLAIGGWLTGTTFVTSWYT). Histidine 116 is a chlorophyll a binding site. Residues 123-139 (GFMLRQFEIARLVGIRP) traverse the membrane as a helical segment. Pheophytin a is bound by residues glutamine 128 and asparagine 141. A helical transmembrane segment spans residues 151–164 (VFVSVFLMYPLGQS). Histidine 196 contacts chlorophyll a. A helical transmembrane segment spans residues 206-226 (GALLCAIHGATVENTLFEDGE). Residues histidine 213 and phenylalanine 260 each contribute to the a plastoquinone site. Residue histidine 213 coordinates Fe cation. Position 267 (histidine 267) interacts with Fe cation. The helical transmembrane segment at 277–293 (GLWTSSIGIIGLALNLR) threads the bilayer.

Belongs to the reaction center PufL/M/PsbA/D family. PSII is composed of 1 copy each of membrane proteins PsbA, PsbB, PsbC, PsbD, PsbE, PsbF, PsbH, PsbI, PsbJ, PsbK, PsbL, PsbM, PsbT, PsbX, PsbY, PsbZ, Psb30/Ycf12, peripheral proteins PsbO, CyanoQ (PsbQ), PsbU, PsbV and a large number of cofactors. It forms dimeric complexes. The D1/D2 heterodimer binds P680, chlorophylls that are the primary electron donor of PSII, and subsequent electron acceptors. It shares a non-heme iron and each subunit binds pheophytin, quinone, additional chlorophylls, carotenoids and lipids. There is also a Cl(-1) ion associated with D1 and D2, which is required for oxygen evolution. The PSII complex binds additional chlorophylls, carotenoids and specific lipids. is required as a cofactor.

It localises to the cellular thylakoid membrane. The enzyme catalyses 2 a plastoquinone + 4 hnu + 2 H2O = 2 a plastoquinol + O2. Functionally, photosystem II (PSII) is a light-driven water:plastoquinone oxidoreductase that uses light energy to abstract electrons from H(2)O, generating O(2) and a proton gradient subsequently used for ATP formation. It consists of a core antenna complex that captures photons, and an electron transfer chain that converts photonic excitation into a charge separation. The D1/D2 (PsbA/PsbD) reaction center heterodimer binds P680, the primary electron donor of PSII as well as several subsequent electron acceptors. D2 is needed for assembly of a stable PSII complex. The protein is Photosystem II D2 protein of Synechococcus sp. (strain CC9605).